A 373-amino-acid chain; its full sequence is Anhydro-N-acetylmuramic acid kinase (373 aa).

12–19 (GTSLDGVD) contributes to the ATP binding site.

It belongs to the anhydro-N-acetylmuramic acid kinase family.

The catalysed reaction is 1,6-anhydro-N-acetyl-beta-muramate + ATP + H2O = N-acetyl-D-muramate 6-phosphate + ADP + H(+). Its pathway is amino-sugar metabolism; 1,6-anhydro-N-acetylmuramate degradation. It functions in the pathway cell wall biogenesis; peptidoglycan recycling. Functionally, catalyzes the specific phosphorylation of 1,6-anhydro-N-acetylmuramic acid (anhMurNAc) with the simultaneous cleavage of the 1,6-anhydro ring, generating MurNAc-6-P. Is required for the utilization of anhMurNAc either imported from the medium or derived from its own cell wall murein, and thus plays a role in cell wall recycling. The sequence is that of Anhydro-N-acetylmuramic acid kinase from Salmonella agona (strain SL483).